Reading from the N-terminus, the 160-residue chain is Cytochrome b6-f complex subunit 4 (160 aa).

The next 3 membrane-spanning stretches (helical) occupy residues 36-56 (LLYIFPVCIFGTIACTVGLSV), 95-115 (LLGVLLMAGVPVGLLTVPFIE), and 131-151 (TVFLLGTVVAIWLGIGAALPI).

Belongs to the cytochrome b family. PetD subfamily. As to quaternary structure, the 4 large subunits of the cytochrome b6-f complex are cytochrome b6, subunit IV (17 kDa polypeptide, petD), cytochrome f and the Rieske protein, while the 4 small subunits are petG, petL, petM and petN. The complex functions as a dimer.

The protein localises to the plastid. It localises to the chloroplast thylakoid membrane. Component of the cytochrome b6-f complex, which mediates electron transfer between photosystem II (PSII) and photosystem I (PSI), cyclic electron flow around PSI, and state transitions. The polypeptide is Cytochrome b6-f complex subunit 4 (Chaetosphaeridium globosum (Charophycean green alga)).